Here is a 117-residue protein sequence, read N- to C-terminus: Putative membrane protein insertion efficiency factor (117 aa).

It belongs to the UPF0161 family.

Its subcellular location is the cell inner membrane. In terms of biological role, could be involved in insertion of integral membrane proteins into the membrane. This is Putative membrane protein insertion efficiency factor from Helicobacter pylori (strain ATCC 700392 / 26695) (Campylobacter pylori).